Reading from the N-terminus, the 401-residue chain is Acetate kinase (401 aa).

N7 lines the Mg(2+) pocket. K14 contributes to the ATP binding site. R91 contacts substrate. Catalysis depends on D148, which acts as the Proton donor/acceptor. ATP contacts are provided by residues 208-212, 283-285, and 331-335; these read HLGNG, DFR, and GVGEN. E384 lines the Mg(2+) pocket.

It belongs to the acetokinase family. As to quaternary structure, homodimer. Mg(2+) is required as a cofactor. Mn(2+) serves as cofactor.

It localises to the cytoplasm. The catalysed reaction is acetate + ATP = acetyl phosphate + ADP. It functions in the pathway metabolic intermediate biosynthesis; acetyl-CoA biosynthesis; acetyl-CoA from acetate: step 1/2. Functionally, catalyzes the formation of acetyl phosphate from acetate and ATP. Can also catalyze the reverse reaction. This Helicobacter hepaticus (strain ATCC 51449 / 3B1) protein is Acetate kinase.